The following is a 255-amino-acid chain: Ribonuclease HII (255 aa).

Positions A72–L255 constitute an RNase H type-2 domain. D78, E79, and D170 together coordinate a divalent metal cation.

It belongs to the RNase HII family. It depends on Mn(2+) as a cofactor. Mg(2+) is required as a cofactor.

It localises to the cytoplasm. It catalyses the reaction Endonucleolytic cleavage to 5'-phosphomonoester.. Functionally, endonuclease that specifically degrades the RNA of RNA-DNA hybrids. The sequence is that of Ribonuclease HII from Staphylococcus aureus (strain MRSA252).